We begin with the raw amino-acid sequence, 382 residues long: Sphingoid long-chain base transporter RSB1 (382 aa).

At 1–34 (MSNATNNTLGSLLPQLEAAANSNSLYGGMVPNLR) the chain is on the extracellular side. N3 and N6 each carry an N-linked (GlcNAc...) asparagine glycan. Residues 35-55 (FNITMIVIWGILLTIHVVQLL) form a helical membrane-spanning segment. The Cytoplasmic segment spans residues 56-57 (MR). A helical membrane pass occupies residues 58–78 (QYWFSIAFICTGILEVLGFIG). At 79–90 (RTWSHSNVADMD) the chain is on the extracellular side. The helical transmembrane segment at 91 to 111 (AFLLNMICLTIAPVFTMGGIY) threads the bilayer. Residues 112-135 (YQLAKLIEVYGHRFSLLPSPMAYS) lie on the Cytoplasmic side of the membrane. A helical membrane pass occupies residues 136–156 (FIFICSDIVSLVVQAVGGGLC). Residues 157 to 171 (GVAVTDGTSTTTGNH) are Extracellular-facing. A helical membrane pass occupies residues 172 to 192 (VFIAGLAIQVASMAIFLMLWF). Residues 193–241 (HFLFRIYISVRWEHINSRPISLSLLKISQTEVDYLYREKFHFLRLEPKR) lie on the Cytoplasmic side of the membrane. A helical membrane pass occupies residues 242-262 (WVFHYFNLAITVAVLTIFTRC). Topologically, residues 263-281 (CYRLAELVVGWDGYLITHE) are extracellular. A helical membrane pass occupies residues 282 to 302 (WYFIILDALMMAIATVTLTIF). The Cytoplasmic segment spans residues 303 to 382 (HPGFAFKGRS…LFSSKKKAKL (80 aa)).

This sequence belongs to the lipid-translocating exporter (LTE) (TC 9.A.26.1) family.

It is found in the cell membrane. Catalyzes the ATP-dependent translocation of sphingoid long-chain bases (LCBs) from the cytoplasmic site toward the extracytoplasmic side of the membrane (flip-flop). Involved in the establishment of the functional lipid asymmetry of the plasma membrane. Regulates intracellular levels of LCBs, sphingolipid precursors that are growth inhibitory at increased levels. The chain is Sphingoid long-chain base transporter RSB1 (RSB1) from Saccharomyces cerevisiae (strain ATCC 204508 / S288c) (Baker's yeast).